We begin with the raw amino-acid sequence, 291 residues long: Protease HtpX (291 aa).

Helical transmembrane passes span 4-24 (VLLF…VLSV) and 37-57 (GGLL…SLLM). His-143 lines the Zn(2+) pocket. Glu-144 is an active-site residue. His-147 is a Zn(2+) binding site. 2 consecutive transmembrane segments (helical) span residues 158–178 (LIQG…AGIV) and 198–218 (FAIS…IVMW). Glu-224 serves as a coordination point for Zn(2+).

The protein belongs to the peptidase M48B family. It depends on Zn(2+) as a cofactor.

It is found in the cell inner membrane. This chain is Protease HtpX, found in Tolumonas auensis (strain DSM 9187 / NBRC 110442 / TA 4).